The following is a 188-amino-acid chain: Large ribosomal subunit protein eL18 (188 aa).

It belongs to the eukaryotic ribosomal protein eL18 family.

The protein resides in the cytoplasm. This Drosophila melanogaster (Fruit fly) protein is Large ribosomal subunit protein eL18 (RpL18).